Consider the following 436-residue polypeptide: ATP-dependent protease ATPase subunit HslU (436 aa).

Residues isoleucine 19, 61–66 (GVGKTE), aspartate 249, glutamate 314, and arginine 386 contribute to the ATP site.

It belongs to the ClpX chaperone family. HslU subfamily. As to quaternary structure, a double ring-shaped homohexamer of HslV is capped on each side by a ring-shaped HslU homohexamer. The assembly of the HslU/HslV complex is dependent on binding of ATP.

It localises to the cytoplasm. Functionally, ATPase subunit of a proteasome-like degradation complex; this subunit has chaperone activity. The binding of ATP and its subsequent hydrolysis by HslU are essential for unfolding of protein substrates subsequently hydrolyzed by HslV. HslU recognizes the N-terminal part of its protein substrates and unfolds these before they are guided to HslV for hydrolysis. In Bartonella bacilliformis (strain ATCC 35685 / KC583 / Herrer 020/F12,63), this protein is ATP-dependent protease ATPase subunit HslU.